Here is a 268-residue protein sequence, read N- to C-terminus: D-alanyl-D-alanine carboxypeptidase (268 aa).

The chain crosses the membrane as a helical span at residues 25-47 (AFLWAFIISFTVCTLFLGWRLVS). Residues Q151, 179–181 (WVA), and S186 contribute to the substrate site. Positions 188 and 195 each coordinate Zn(2+). The Proton donor/acceptor role is filled by E238. H241 lines the Zn(2+) pocket.

The protein belongs to the peptidase M15B family. In terms of assembly, monomer. Zn(2+) is required as a cofactor.

It is found in the cell membrane. With respect to regulation, carboxypeptidase activity is insensitive to beta-lactams since it is not affected by penicillin G or ampicillin and is inhibited only by very high concentrations of cefalotin and cefoxitin. Its function is as follows. Carboxypeptidase that cleaves the C-terminal D-alanine residue from the peptidoglycan-derived pentapeptide L-Ala-gamma-D-Glu-L-Lys-D-Ala-D-Ala in vitro. Therefore, should contribute in vivo to the hydrolysis of the D-alanyl-D-alanine-containing peptidoglycan precursors. May increase the level of glycopeptide antibiotics resistance by decreasing the availability of D-Ala-D-Ala termini from the cell surface, which constitute the antibiotic target residues. The polypeptide is D-alanyl-D-alanine carboxypeptidase (Enterococcus faecalis (strain ATCC 700802 / V583)).